The following is a 108-amino-acid chain: UPF0060 membrane protein CJA_3703 (108 aa).

Transmembrane regions (helical) follow at residues 6 to 26, 31 to 51, 61 to 81, and 85 to 105; these read LLFV…YLWL, SIWL…LLTL, AAYG…VDGV, and AYDW…AMGW.

This sequence belongs to the UPF0060 family.

It is found in the cell inner membrane. The chain is UPF0060 membrane protein CJA_3703 from Cellvibrio japonicus (strain Ueda107) (Pseudomonas fluorescens subsp. cellulosa).